The primary structure comprises 164 residues: UPF0304 protein YfbU (164 aa).

The protein belongs to the UPF0304 family.

In Shigella flexneri serotype 5b (strain 8401), this protein is UPF0304 protein YfbU.